The chain runs to 95 residues: Aspartyl/glutamyl-tRNA(Asn/Gln) amidotransferase subunit C (95 aa).

This sequence belongs to the GatC family. As to quaternary structure, heterotrimer of A, B and C subunits.

The enzyme catalyses L-glutamyl-tRNA(Gln) + L-glutamine + ATP + H2O = L-glutaminyl-tRNA(Gln) + L-glutamate + ADP + phosphate + H(+). It catalyses the reaction L-aspartyl-tRNA(Asn) + L-glutamine + ATP + H2O = L-asparaginyl-tRNA(Asn) + L-glutamate + ADP + phosphate + 2 H(+). In terms of biological role, allows the formation of correctly charged Asn-tRNA(Asn) or Gln-tRNA(Gln) through the transamidation of misacylated Asp-tRNA(Asn) or Glu-tRNA(Gln) in organisms which lack either or both of asparaginyl-tRNA or glutaminyl-tRNA synthetases. The reaction takes place in the presence of glutamine and ATP through an activated phospho-Asp-tRNA(Asn) or phospho-Glu-tRNA(Gln). The polypeptide is Aspartyl/glutamyl-tRNA(Asn/Gln) amidotransferase subunit C (Rhodopseudomonas palustris (strain BisB5)).